A 240-amino-acid chain; its full sequence is MVQHLSAQEIIQYISDAKKSTPLKVYVNGHFENVTFPESFKVFGSEHSKVIFCEADEWKQFYQKNHSLITELEIEMDRRNSAIPLKDLTNTNARIEPGAFIREQAIIEDGAVVMMGATINIGAIVGEGTMIDMNATLGGRATTGKNVHVGAGAVLAGVIEPPSASPVVIEDNVLIGANAVILEGVRVGAGAIVAAGAIVTQDVPAGAVVAGTPAKVIKQTSEVQDSKREIVSALRKLNNE.

It belongs to the transferase hexapeptide repeat family. DapH subfamily.

The catalysed reaction is (S)-2,3,4,5-tetrahydrodipicolinate + acetyl-CoA + H2O = L-2-acetamido-6-oxoheptanedioate + CoA. The protein operates within amino-acid biosynthesis; L-lysine biosynthesis via DAP pathway; LL-2,6-diaminopimelate from (S)-tetrahydrodipicolinate (acetylase route): step 1/3. In terms of biological role, catalyzes the transfer of an acetyl group from acetyl-CoA to tetrahydrodipicolinate. This is 2,3,4,5-tetrahydropyridine-2,6-dicarboxylate N-acetyltransferase from Staphylococcus epidermidis (strain ATCC 35984 / DSM 28319 / BCRC 17069 / CCUG 31568 / BM 3577 / RP62A).